Here is a 103-residue protein sequence, read N- to C-terminus: Small ribosomal subunit protein cS23 (103 aa).

The protein belongs to the chloroplast-specific ribosomal protein cS23 family. In terms of assembly, part of the 30S ribosomal subunit.

The protein localises to the plastid. It is found in the chloroplast. In terms of biological role, probably a ribosomal protein or a ribosome-associated protein. This Euglena granulata protein is Small ribosomal subunit protein cS23 (ycf65).